The following is a 309-amino-acid chain: Dicarboxylate carrier UCP2 (309 aa).

The Mitochondrial intermembrane segment spans residues 1-16; the sequence is MVGFKATDVPPTATVK. 3 Solcar repeats span residues 11–106, 114–203, and 212–297; these read PTAT…VKQF, AGIG…IKDT, and DDLP…LKRA. The important for interaction with long-chain fatty acids stretch occupies residues 16 to 63; it reads KFLGAGTAACIADLITFPLDTAKVRLQIQGESQGLVRTAASAQYRGVL. A helical membrane pass occupies residues 17–40; it reads FLGAGTAACIADLITFPLDTAKVR. The Mitochondrial matrix segment spans residues 41 to 77; the sequence is LQIQGESQGLVRTAASAQYRGVLGTILTMVRTEGPRS. A helical membrane pass occupies residues 78–103; sequence LYNGLVAGLQRQMSFASVRIGLYDSV. The Mitochondrial intermembrane segment spans residues 104-119; the sequence is KQFYTKGSEHAGIGSR. Residues 120–145 traverse the membrane as a helical segment; the sequence is LLAGSTTGALAVAVAQPTDVVKVRFQ. The Mitochondrial matrix portion of the chain corresponds to 146-173; the sequence is AQARAGGGRRYQSTVEAYKTIAREEGIR. The helical transmembrane segment at 174–199 threads the bilayer; it reads GLWKGTSPNVARNAIVNCAELVTYDL. At 200–217 the chain is on the mitochondrial intermembrane side; sequence IKDTLLKANLMTDDLPCH. A helical transmembrane segment spans residues 218 to 242; the sequence is FTSAFGAGFCTTVIASPVDVVKTRY. Over 243–268 the chain is Mitochondrial matrix; sequence MNSALGQYHSAGHCALTMLRKEGPRA. The chain crosses the membrane as a helical span at residues 269-294; the sequence is FYKGFMPSFLRLGSWNVVMFVTYEQL. The important for interaction with long-chain fatty acids stretch occupies residues 278–285; sequence LRLGSWNV. At 295 to 309 the chain is on the mitochondrial intermembrane side; sequence KRALMAAYQSREAPF.

The protein belongs to the mitochondrial carrier (TC 2.A.29) family. Homotetramer. Adopts an asymmetrical dimer of dimers functional form. Interacts with MICU1 (when methylated); leading to decrease the calcium sensitivity of MICU1. In terms of tissue distribution, widely expressed. Highest in spleen, lung, white and brown adipose tissues. 4-6 times higher levels are detected in white adipose tissue of ob/ob and db/db mice when compared to lean littermates. Expressed in neurons of the ventromedial nucleus of the hypothalamus (at protein level). Expressed in thymocytes (at protein level).

The protein resides in the mitochondrion inner membrane. The catalysed reaction is L-aspartate(out) + phosphate(in) + H(+)(in) = L-aspartate(in) + phosphate(out) + H(+)(out). It carries out the reaction oxaloacetate(out) + phosphate(in) + H(+)(in) = oxaloacetate(in) + phosphate(out) + H(+)(out). It catalyses the reaction (S)-malate(out) + phosphate(in) + H(+)(in) = (S)-malate(in) + phosphate(out) + H(+)(out). The enzyme catalyses malonate(out) + phosphate(in) + H(+)(in) = malonate(in) + phosphate(out) + H(+)(out). The catalysed reaction is sulfate(out) + phosphate(in) + H(+)(in) = sulfate(in) + phosphate(out) + H(+)(out). It carries out the reaction (S)-malate(out) = (S)-malate(in). It catalyses the reaction L-aspartate(out) = L-aspartate(in). The enzyme catalyses phosphate(in) = phosphate(out). The catalysed reaction is chloride(in) = chloride(out). It carries out the reaction H(+)(in) = H(+)(out). It catalyses the reaction a long-chain fatty acid(out) = a long-chain fatty acid(in). With respect to regulation, proton conductance is activated by free long-chain fatty acids and allosterically inhibited by purine nucleotides. Could be constitutively inhibited by GDP. Its function is as follows. Antiporter that exports dicarboxylate intermediates of the Krebs cycle in exchange for phosphate plus a proton across the inner membrane of mitochondria, a process driven by mitochondrial motive force with an overall impact on glycolysis, glutaminolysis and glutathione-dependent redox balance. Continuous export of oxaloacetate and related four-carbon dicarboxylates from mitochondrial matrix into the cytosol negatively regulates the oxidation of acetyl-CoA substrates via the Krebs cycle lowering the ATP/ADP ratio and reactive oxygen species (ROS) production. May mediate inducible proton entry into the mitochondrial matrix affecting ATP turnover as a protection mechanism against oxidative stress. The proton currents are most likely associated with fatty acid flipping across the inner membrane of mitochondria in a metabolic process regulated by free fatty acids and purine nucleotides. Regulates the use of glucose as a source of energy. Required for glucose-induced DRP1-dependent mitochondrial fission and neuron activation in the ventromedial nucleus of the hypothalamus (VMH). This mitochondrial adaptation mechanism modulates the VMH pool of glucose-excited neurons with an impact on systemic glucose homeostasis. Regulates ROS levels and metabolic reprogramming of macrophages during the resolution phase of inflammation. Attenuates ROS production in response to IL33 to preserve the integrity of the Krebs cycle required for persistent production of itaconate and subsequent GATA3-dependent differentiation of inflammation-resolving alternatively activated macrophages. Can unidirectionally transport anions including L-malate, L-aspartate, phosphate and chloride ions. Does not mediate adaptive thermogenesis. This Mus musculus (Mouse) protein is Dicarboxylate carrier UCP2 (Ucp2).